The following is a 425-amino-acid chain: Formyl-CoA:oxalate CoA-transferase (425 aa).

CoA-binding positions include 17-18, Arg-38, 72-75, 96-98, Arg-104, and 136-139; these read QS, LDTK, NFG, and KVYE. Asp-168 serves as the catalytic Nucleophile. 247-249 contacts substrate; that stretch reads GGQ.

The protein belongs to the CoA-transferase III family. Frc subfamily. Homodimer.

The catalysed reaction is formyl-CoA + oxalate = oxalyl-CoA + formate. Its pathway is metabolic intermediate degradation; oxalate degradation; CO(2) and formate from oxalate: step 1/2. Functionally, involved in the catabolism of oxalate and in the adapatation to low pH via the induction of the oxalate-dependent acid tolerance response (ATR). Catalyzes the transfer of the CoA moiety from formyl-CoA to oxalate. The protein is Formyl-CoA:oxalate CoA-transferase of Bradyrhizobium diazoefficiens (strain JCM 10833 / BCRC 13528 / IAM 13628 / NBRC 14792 / USDA 110).